Consider the following 556-residue polypeptide: Genetic interactor of prohibitins 3, mitochondrial (556 aa).

The N-terminal 21 residues, 1–21, are a transit peptide targeting the mitochondrion; sequence MLNLCHALRGVRQFSCSVIVK. In terms of domain architecture, CP-type G spans 113–305; the sequence is ESTLNDILNY…LFDLPGYSTS (193 aa).

It belongs to the TRAFAC class YlqF/YawG GTPase family. GEP3 subfamily.

Its subcellular location is the mitochondrion. In terms of biological role, interacts genetically with prohibitins and thus may be involved in the mitochondrial lipid metabolism. The chain is Genetic interactor of prohibitins 3, mitochondrial (GEP3) from Saccharomyces cerevisiae (strain Zymaflore VL3) (Baker's yeast).